A 440-amino-acid polypeptide reads, in one-letter code: Proline--tRNA ligase (440 aa).

It belongs to the class-II aminoacyl-tRNA synthetase family. ProS type 2 subfamily. As to quaternary structure, homodimer.

It is found in the cytoplasm. The enzyme catalyses tRNA(Pro) + L-proline + ATP = L-prolyl-tRNA(Pro) + AMP + diphosphate. Its function is as follows. Catalyzes the attachment of proline to tRNA(Pro) in a two-step reaction: proline is first activated by ATP to form Pro-AMP and then transferred to the acceptor end of tRNA(Pro). The sequence is that of Proline--tRNA ligase from Xanthobacter autotrophicus (strain ATCC BAA-1158 / Py2).